A 1184-amino-acid chain; its full sequence is von Willebrand factor A domain-containing protein 3A (1184 aa).

Residues 1-24 (MKKYRKISIGCFAMATQTSHVFHG) form the signal peptide. Positions 40 to 62 (GRDSKKPLKQKNMNGLGQNSDNG) are disordered. Residues 50–62 (KNMNGLGQNSDNG) show a composition bias toward polar residues. Positions 333 to 357 (TSRDMDELLAEIQKAQSLLSHVQAL) form a coiled coil. The VWFA 1 domain occupies 511–708 (RVVVLLDISA…SIMSEMEKAL (198 aa)). N709 carries N-linked (GlcNAc...) asparagine glycosylation. Residues 729-780 (LGSSALPKEKPKTLQLRSQPKKLCPPRPTVPLGARMSIKDDPDREKSPPLKS) form a disordered region. The segment covering 765–776 (SIKDDPDREKSP) has biased composition (basic and acidic residues). The 173-residue stretch at 959-1131 (KVCILLDTSG…KIHSLLTKGF (173 aa)) folds into the VWFA 2 domain.

The protein resides in the secreted. In Homo sapiens (Human), this protein is von Willebrand factor A domain-containing protein 3A (VWA3A).